Here is a 285-residue protein sequence, read N- to C-terminus: ATP synthase gamma chain (285 aa).

It belongs to the ATPase gamma chain family. In terms of assembly, F-type ATPases have 2 components, CF(1) - the catalytic core - and CF(0) - the membrane proton channel. CF(1) has five subunits: alpha(3), beta(3), gamma(1), delta(1), epsilon(1). CF(0) has three main subunits: a, b and c.

It is found in the cell membrane. In terms of biological role, produces ATP from ADP in the presence of a proton gradient across the membrane. The gamma chain is believed to be important in regulating ATPase activity and the flow of protons through the CF(0) complex. This chain is ATP synthase gamma chain, found in Clostridium novyi (strain NT).